The sequence spans 347 residues: MSNQVMLPRESGSFIASHSKDVSLCEEGISRASEIVFKSLKSNAYSYKTWKDHELHPKEMSKATVDWIFVLDTLNFSFWVDDGLEPWTIRHKGKDFQGYWALCAGINRAIEEGIHLTSPSYYRNITIDDLKHIFRSETSTEMPLLEERAKNLRETGNILAQTFQNSFAHMILLANKSAKLLLSMVINNFDCFRDDGDFCNQKVSFYKRAQILIADTWACFEGKGFGEFPDIDFLTMFADYKVPQGLYDLGVLQFSEALKQKLVTGQLIPHGDQLEMEIRGNSIWAVEKIYLAVKLKAKKSPEFSNMDSLELAQYLNSVIIDFYLWDFSKNVEARASIPCHKTRTIFY.

Queuine contacts are provided by His53, Phe237, Asp239, Asp321, and Asp326. Asp239 serves as the catalytic Nucleophile or transition state stabilizer.

Belongs to the QNG1 protein family.

The enzyme catalyses queuosine 5'-phosphate + H2O = queuine + D-ribose 5-phosphate. Its function is as follows. Catalyzes the hydrolysis of queuosine 5'-phosphate, releasing the nucleobase queuine (q). Is required for salvage of queuine from exogenous queuosine (Q) that is imported and then converted to queuosine 5'-phosphate intracellularly. This chain is Queuosine 5'-phosphate N-glycosylase/hydrolase, found in Nematostella vectensis (Starlet sea anemone).